The following is a 374-amino-acid chain: Beta sliding clamp (374 aa).

This sequence belongs to the beta sliding clamp family. Forms a ring-shaped head-to-tail homodimer around DNA which binds and tethers DNA polymerases and other proteins to the DNA. The DNA replisome complex has a single clamp-loading complex (3 tau and 1 each of delta, delta', psi and chi subunits) which binds 3 Pol III cores (1 core on the leading strand and 2 on the lagging strand) each with a beta sliding clamp dimer. Additional proteins in the replisome are other copies of gamma, psi and chi, Ssb, DNA helicase and RNA primase.

The protein resides in the cytoplasm. In terms of biological role, confers DNA tethering and processivity to DNA polymerases and other proteins. Acts as a clamp, forming a ring around DNA (a reaction catalyzed by the clamp-loading complex) which diffuses in an ATP-independent manner freely and bidirectionally along dsDNA. Initially characterized for its ability to contact the catalytic subunit of DNA polymerase III (Pol III), a complex, multichain enzyme responsible for most of the replicative synthesis in bacteria; Pol III exhibits 3'-5' exonuclease proofreading activity. The beta chain is required for initiation of replication as well as for processivity of DNA replication. The chain is Beta sliding clamp (dnaN) from Helicobacter pylori (strain J99 / ATCC 700824) (Campylobacter pylori J99).